A 602-amino-acid chain; its full sequence is MSIISMHVGILNRPAAYNHLRNLDRRASKPRHVSSTAAATRLRVSCATQLEIKSVDETRRSGNYNPTAWDFNYIQSLDNQYKKERYSTRHAELTVQVKKLLEEEMEAVQKLELIEDLKNLGISYPFKDNIQQILNQIYNEHKCCHNSEVEEKDLYFTALRFRLLRQQGFEVSQEVFDHFKNEKGTDFKPNLADDTKGLLQLYEASFLLREAEDTLELARQFSTKLLQKKVDENGDDKIEDNLLLWIRRSLELPLHWRVQRLEARGFLDAYVRRPDMNPIVFELAKLDFNITQATQQEELKDLSRWWNSTGLAEKLPFARDRVVESYFWAMGTFEPHQYGYQRELVAKIIALATVVDDVYDVYGTLEELELFTDAIRRWDRESIDQLPYYMQLCFLTVNNFVFELAHDVLKDKSFNCLPHLQRSWLDLAEAYLVEAKWYHSRYTPSLEEYLNIARVSVTCPTIVSQMYFALPIPIEKPVIEIMYKYHDILYLSGMLLRLPDDLGTASFELKRGDVQKAVQCYMKERNVPENEAREHVKFLIREASKQINTAMATDCPFTEDFAVAAANLGRVANFVYVDGDGFGVQHSKIYEQIGTLMFEPYP.

Residues Asp-356, Asp-360, Asp-500, Thr-504, and Glu-508 each coordinate Mg(2+). A DDXXD motif motif is present at residues 356-360; the sequence is DDVYD.

Belongs to the terpene synthase family. Requires Mg(2+) as cofactor. Mn(2+) is required as a cofactor.

It catalyses the reaction (2E)-geranyl diphosphate = (4R)-limonene + diphosphate. Catalyzes the formation of (R)-(+)-limonene, terpinolene, (1R,5S)-(+)-camphene, (1R,5R)-(+)-alpha-pinene, beta-myrcene and traces of alpha-phellandrene. The polypeptide is (R)-limonene synthase (Lavandula angustifolia (Lavender)).